A 23-amino-acid chain; its full sequence is Endochitinase B (23 aa).

Belongs to the glycosyl hydrolase 19 family. Chitinase class I subfamily.

It carries out the reaction Random endo-hydrolysis of N-acetyl-beta-D-glucosaminide (1-&gt;4)-beta-linkages in chitin and chitodextrins.. In terms of biological role, defense against chitin-containing fungal pathogens. The polypeptide is Endochitinase B (Pisum sativum (Garden pea)).